The following is a 446-amino-acid chain: UPF0597 protein DvMF_1488 (446 aa).

This sequence belongs to the UPF0597 family.

This Nitratidesulfovibrio vulgaris (strain DSM 19637 / Miyazaki F) (Desulfovibrio vulgaris) protein is UPF0597 protein DvMF_1488.